Consider the following 247-residue polypeptide: Small ribosomal subunit protein uS2 (247 aa).

This sequence belongs to the universal ribosomal protein uS2 family.

In Cupriavidus pinatubonensis (strain JMP 134 / LMG 1197) (Cupriavidus necator (strain JMP 134)), this protein is Small ribosomal subunit protein uS2.